Here is a 418-residue protein sequence, read N- to C-terminus: Serine hydroxymethyltransferase (418 aa).

(6S)-5,6,7,8-tetrahydrofolate is bound by residues leucine 120 and 124-126 (GHL). Lysine 229 is subject to N6-(pyridoxal phosphate)lysine. (6S)-5,6,7,8-tetrahydrofolate is bound at residue 353–355 (SPF).

The protein belongs to the SHMT family. Homodimer. Pyridoxal 5'-phosphate is required as a cofactor.

The protein resides in the cytoplasm. It carries out the reaction (6R)-5,10-methylene-5,6,7,8-tetrahydrofolate + glycine + H2O = (6S)-5,6,7,8-tetrahydrofolate + L-serine. It functions in the pathway one-carbon metabolism; tetrahydrofolate interconversion. It participates in amino-acid biosynthesis; glycine biosynthesis; glycine from L-serine: step 1/1. Functionally, catalyzes the reversible interconversion of serine and glycine with tetrahydrofolate (THF) serving as the one-carbon carrier. This reaction serves as the major source of one-carbon groups required for the biosynthesis of purines, thymidylate, methionine, and other important biomolecules. Also exhibits THF-independent aldolase activity toward beta-hydroxyamino acids, producing glycine and aldehydes, via a retro-aldol mechanism. This chain is Serine hydroxymethyltransferase, found in Psychrobacter arcticus (strain DSM 17307 / VKM B-2377 / 273-4).